Reading from the N-terminus, the 91-residue chain is Cytochrome b-c1 complex subunit 6, mitochondrial (91 aa).

The transit peptide at 1–13 directs the protein to the mitochondrion; sequence MGLEDEQKMLTES. The interval 1-30 is disordered; it reads MGLEDEQKMLTESGDPEEEEEEEEELVDPL. Residues 14 to 27 show a composition bias toward acidic residues; it reads GDPEEEEEEEEELV. Intrachain disulfides connect Cys-37/Cys-81 and Cys-53/Cys-67. Lys-42 is modified (N6-acetyllysine). Lys-85 is modified (N6-acetyllysine).

The protein belongs to the UQCRH/QCR6 family. As to quaternary structure, component of the ubiquinol-cytochrome c oxidoreductase (cytochrome b-c1 complex, complex III, CIII), a multisubunit enzyme composed of 11 subunits. The complex is composed of 3 respiratory subunits cytochrome b, cytochrome c1 and Rieske protein UQCRFS1, 2 core protein subunits UQCRC1/QCR1 and UQCRC2/QCR2, and 6 low-molecular weight protein subunits UQCRH/QCR6, UQCRB/QCR7, UQCRQ/QCR8, UQCR10/QCR9, UQCR11/QCR10 and subunit 9, the cleavage product of Rieske protein UQCRFS1. The complex exists as an obligatory dimer and forms supercomplexes (SCs) in the inner mitochondrial membrane with NADH-ubiquinone oxidoreductase (complex I, CI) and cytochrome c oxidase (complex IV, CIV), resulting in different assemblies (supercomplex SCI(1)III(2)IV(1) and megacomplex MCI(2)III(2)IV(2)).

It is found in the mitochondrion inner membrane. Component of the ubiquinol-cytochrome c oxidoreductase, a multisubunit transmembrane complex that is part of the mitochondrial electron transport chain which drives oxidative phosphorylation. The respiratory chain contains 3 multisubunit complexes succinate dehydrogenase (complex II, CII), ubiquinol-cytochrome c oxidoreductase (cytochrome b-c1 complex, complex III, CIII) and cytochrome c oxidase (complex IV, CIV), that cooperate to transfer electrons derived from NADH and succinate to molecular oxygen, creating an electrochemical gradient over the inner membrane that drives transmembrane transport and the ATP synthase. The cytochrome b-c1 complex catalyzes electron transfer from ubiquinol to cytochrome c, linking this redox reaction to translocation of protons across the mitochondrial inner membrane, with protons being carried across the membrane as hydrogens on the quinol. In the process called Q cycle, 2 protons are consumed from the matrix, 4 protons are released into the intermembrane space and 2 electrons are passed to cytochrome c. In Homo sapiens (Human), this protein is Cytochrome b-c1 complex subunit 6, mitochondrial (UQCRH).